Consider the following 522-residue polypeptide: Peptide chain release factor 3 (522 aa).

In terms of domain architecture, tr-type G spans 10 to 277 (ASRKTFAIIS…TFVDFAPSPS (268 aa)). Residues 19 to 26 (SHPDAGKT), 87 to 91 (DTPGH), and 141 to 144 (NKMD) contribute to the GTP site.

It belongs to the TRAFAC class translation factor GTPase superfamily. Classic translation factor GTPase family. PrfC subfamily.

It localises to the cytoplasm. Functionally, increases the formation of ribosomal termination complexes and stimulates activities of RF-1 and RF-2. It binds guanine nucleotides and has strong preference for UGA stop codons. It may interact directly with the ribosome. The stimulation of RF-1 and RF-2 is significantly reduced by GTP and GDP, but not by GMP. In Listeria monocytogenes serotype 4b (strain CLIP80459), this protein is Peptide chain release factor 3.